Here is a 116-residue protein sequence, read N- to C-terminus: U16-barytoxin-Tl1c (116 aa).

An N-terminal signal peptide occupies residues 1–20 (MKTIIVFLSLLVLATKFGDA). Positions 21 to 74 (NEGVNQEQMKEVIQNEFREDFLNEMAAMSLLQQLEAIESTLLEKEADRNSRQKR) are excised as a propeptide. 3 disulfides stabilise this stretch: C75–C90, C82–C95, and C89–C110.

Belongs to the neurotoxin 14 (magi-1) family. 06 (ICK-Trit) subfamily. In terms of tissue distribution, expressed by the venom gland.

It is found in the secreted. Ion channel inhibitor. In Trittame loki (Brush-footed trapdoor spider), this protein is U16-barytoxin-Tl1c.